A 463-amino-acid chain; its full sequence is MKQQAKSRKPQQPEYIFQVETLSHEGRGIAHYGSHPDHPADKHGKKVFIRYALPGETVKAQITHEAKRLEEAEMVELLAEPSANRVEAVCPHYGICGGCSMQHIHPDEQIHLKQNVLQSHLQHFAGIQPEQWLEPIRSLQSDYRRRARIGVRYLPKQDRLILGFREHHSNRLTSIHTCSVLDKKLSDNLPELRNLLQSLKGKAHIGHVELAKGDHEISLLVRHIEKLNNADVNQLRQFALHKGWQLYLQPKGPESLRRIDEEQGAMRLHYALNAFDVNFAFSPLDFTQVNATVNEQMVQLACELLQLQQGERVLDLFCGLGNFSLPLARCVGAKGQVVGVEASEEMVQRATDNAKRNNLVQASFFSQDLTKDFSHHSWANQGFDALLIDPPRAGAYEIMQYVPNFGAKRIVYVSCNPATLARDAGVLVQHGYQLKKAAVMDMFTHTEHVESIALFEKIQEIND.

A TRAM domain is found at 6–76; it reads KSRKPQQPEY…KRLEEAEMVE (71 aa). Positions 90, 96, 99, and 178 each coordinate [4Fe-4S] cluster. 6 residues coordinate S-adenosyl-L-methionine: Gln-288, Phe-317, Asn-322, Glu-341, Asp-368, and Asp-389. The active-site Nucleophile is Cys-415.

It belongs to the class I-like SAM-binding methyltransferase superfamily. RNA M5U methyltransferase family. RlmD subfamily.

The enzyme catalyses uridine(1939) in 23S rRNA + S-adenosyl-L-methionine = 5-methyluridine(1939) in 23S rRNA + S-adenosyl-L-homocysteine + H(+). Functionally, catalyzes the formation of 5-methyl-uridine at position 1939 (m5U1939) in 23S rRNA. The sequence is that of 23S rRNA (uracil(1939)-C(5))-methyltransferase RlmD from Acinetobacter baumannii (strain AYE).